The chain runs to 259 residues: Glucose-1-phosphate thymidylyltransferase (259 aa).

The protein belongs to the inositol monophosphatase superfamily.

The enzyme catalyses dTTP + alpha-D-glucose 1-phosphate + H(+) = dTDP-alpha-D-glucose + diphosphate. Its pathway is antibiotic biosynthesis; streptomycin biosynthesis. This is Glucose-1-phosphate thymidylyltransferase (strO) from Streptomyces griseus.